A 216-amino-acid chain; its full sequence is MACHSALAAVPSSRLHFYAPRPPLSTSVCPFQTALLGQPLRIYSSGASIAAAASPRSMVVVAATKKAVAVLKGTSQVDGVVTLVQEDDGPTTVNVRITGLTPGLHGFHLHEYGDTTNGCISTGSHFNPNKLTHGAPMDVVRHAGDLGNIVANVDGLAEATIVDDQIPLSGSNSVVGRAFVVHELEDDLGKGGHELSLTTGNAGGRLACGVVGLTPV.

The transit peptide at 1-62 (MACHSALAAV…ASPRSMVVVA (62 aa)) directs the protein to the chloroplast. Residues His108, His110, and His125 each coordinate Cu cation. The cysteines at positions 119 and 208 are disulfide-linked. Zn(2+) contacts are provided by His125, His133, His142, and Asp145. Residue His182 participates in Cu cation binding.

The protein belongs to the Cu-Zn superoxide dismutase family. Homotetramer. It depends on Cu cation as a cofactor. Zn(2+) is required as a cofactor.

The protein resides in the plastid. It is found in the chloroplast. It carries out the reaction 2 superoxide + 2 H(+) = H2O2 + O2. Functionally, destroys radicals which are normally produced within the cells and which are toxic to biological systems. The protein is Superoxide dismutase [Cu-Zn], chloroplastic (SODCP) of Zantedeschia aethiopica (White calla lily).